A 138-amino-acid chain; its full sequence is Large ribosomal subunit protein uL16 (138 aa).

Residues 1 to 19 (MLIPKRVKYRRQHRPHRSG) show a composition bias toward basic residues. A disordered region spans residues 1–24 (MLIPKRVKYRRQHRPHRSGVSKGG).

Belongs to the universal ribosomal protein uL16 family. In terms of assembly, part of the 50S ribosomal subunit.

Functionally, binds 23S rRNA and is also seen to make contacts with the A and possibly P site tRNAs. This Corynebacterium diphtheriae (strain ATCC 700971 / NCTC 13129 / Biotype gravis) protein is Large ribosomal subunit protein uL16.